Reading from the N-terminus, the 450-residue chain is Probable ECA polymerase (450 aa).

The next 11 helical transmembrane spans lie at 6-26, 37-57, 63-83, 120-140, 155-175, 181-201, 207-227, 228-248, 341-361, 378-398, and 410-430; these read FSGL…LTWF, VFFS…TSVL, VGVA…CFYA, LMGI…FLLF, GVAL…IYFL, AWLF…MIVG, IIIA…ISLW, MLVA…LKRY, LVVM…GLII, YKAA…IVLA, and VFFL…FWLF.

Belongs to the WzyE family. In terms of assembly, probably part of a complex composed of WzxE, WzyE and WzzE.

Its subcellular location is the cell inner membrane. Its pathway is bacterial outer membrane biogenesis; enterobacterial common antigen biosynthesis. Probably involved in the polymerization of enterobacterial common antigen (ECA) trisaccharide repeat units. This chain is Probable ECA polymerase, found in Citrobacter koseri (strain ATCC BAA-895 / CDC 4225-83 / SGSC4696).